The primary structure comprises 439 residues: MAFVDQAEIEVKAGKGGDGIVSFRHEKFVAMGGPFGGDGGHGGSIIFKVDEGLRTLMDFRYNRHFKAQPGGNGGTKGMTGASAEDRYIKVPQGTTVKDVETGEVLGDLLENGQELVVVKGGRGGRGNIHFATPANPAPELSENGEPGQVRKLKLELKVLADVGLVGFPSAGKSTLLSVVSNAKPKVAAYHFTTLSPNIGMVRLDDARDFVMADLPGLIEGASQGVGLGFQFLRHVERTRVVLHLVDMSGIEGNDPYTQYRKILDELGQYDETILNRPHIVVPTKMDMPDSEENLVKFRQEVAADSGLPVQPEIMPISALTREGVQPLMRLTADLLATAPVPESYRPVVEKVSNDKTYDFKPEQHNFTVEWSEETEEWVIGGAEIEKLFLMTNIQRDATIMRFGRQLRHMGVDDALRKAGAKDGDDVRINNSDFVFEFSD.

The Obg domain occupies 1 to 159 (MAFVDQAEIE…RKLKLELKVL (159 aa)). The region spanning 160–336 (ADVGLVGFPS…LMRLTADLLA (177 aa)) is the OBG-type G domain. Residues 166-173 (GFPSAGKS), 191-195 (FTTLS), 213-216 (DLPG), 283-286 (TKMD), and 317-319 (SAL) contribute to the GTP site. Residues Ser-173 and Thr-193 each coordinate Mg(2+). An OCT domain is found at 358–439 (DFKPEQHNFT…NSDFVFEFSD (82 aa)).

This sequence belongs to the TRAFAC class OBG-HflX-like GTPase superfamily. OBG GTPase family. In terms of assembly, monomer. It depends on Mg(2+) as a cofactor.

It localises to the cytoplasm. An essential GTPase which binds GTP, GDP and possibly (p)ppGpp with moderate affinity, with high nucleotide exchange rates and a fairly low GTP hydrolysis rate. Plays a role in control of the cell cycle, stress response, ribosome biogenesis and in those bacteria that undergo differentiation, in morphogenesis control. In Leuconostoc citreum (strain KM20), this protein is GTPase Obg.